A 536-amino-acid chain; its full sequence is Chaperonin GroEL (536 aa).

Residues 29–32 (TLGP), 86–90 (DGTTT), Gly413, and Asp494 contribute to the ATP site.

Belongs to the chaperonin (HSP60) family. In terms of assembly, forms a cylinder of 14 subunits composed of two heptameric rings stacked back-to-back. Interacts with the co-chaperonin GroES.

Its subcellular location is the cytoplasm. It carries out the reaction ATP + H2O + a folded polypeptide = ADP + phosphate + an unfolded polypeptide.. Together with its co-chaperonin GroES, plays an essential role in assisting protein folding. The GroEL-GroES system forms a nano-cage that allows encapsulation of the non-native substrate proteins and provides a physical environment optimized to promote and accelerate protein folding. The chain is Chaperonin GroEL from Acholeplasma laidlawii (strain PG-8A).